A 178-amino-acid chain; its full sequence is ATP synthase subunit delta (178 aa).

This sequence belongs to the ATPase delta chain family. F-type ATPases have 2 components, F(1) - the catalytic core - and F(0) - the membrane proton channel. F(1) has five subunits: alpha(3), beta(3), gamma(1), delta(1), epsilon(1). F(0) has three main subunits: a(1), b(2) and c(10-14). The alpha and beta chains form an alternating ring which encloses part of the gamma chain. F(1) is attached to F(0) by a central stalk formed by the gamma and epsilon chains, while a peripheral stalk is formed by the delta and b chains.

It is found in the cell inner membrane. F(1)F(0) ATP synthase produces ATP from ADP in the presence of a proton or sodium gradient. F-type ATPases consist of two structural domains, F(1) containing the extramembraneous catalytic core and F(0) containing the membrane proton channel, linked together by a central stalk and a peripheral stalk. During catalysis, ATP synthesis in the catalytic domain of F(1) is coupled via a rotary mechanism of the central stalk subunits to proton translocation. Functionally, this protein is part of the stalk that links CF(0) to CF(1). It either transmits conformational changes from CF(0) to CF(1) or is implicated in proton conduction. The polypeptide is ATP synthase subunit delta (Aromatoleum aromaticum (strain DSM 19018 / LMG 30748 / EbN1) (Azoarcus sp. (strain EbN1))).